We begin with the raw amino-acid sequence, 856 residues long: DNA mismatch repair protein MutS (856 aa).

Residue 607-614 (GPNMSGKS) coordinates ATP.

The protein belongs to the DNA mismatch repair MutS family.

This protein is involved in the repair of mismatches in DNA. It is possible that it carries out the mismatch recognition step. This protein has a weak ATPase activity. The chain is DNA mismatch repair protein MutS from Lactobacillus delbrueckii subsp. bulgaricus (strain ATCC BAA-365 / Lb-18).